The sequence spans 371 residues: Maltose/maltodextrin import ATP-binding protein MalK (371 aa).

Residues 4 to 234 (VQLQNVTKAW…PADRFVAGFI (231 aa)) enclose the ABC transporter domain. An ATP-binding site is contributed by 36 to 43 (GPSGCGKS).

This sequence belongs to the ABC transporter superfamily. Maltooligosaccharide importer (TC 3.A.1.1.1) family. As to quaternary structure, the complex is composed of two ATP-binding proteins (MalK), two transmembrane proteins (MalG and MalK) and a solute-binding protein (MalE).

It localises to the cell inner membrane. It carries out the reaction D-maltose(out) + ATP + H2O = D-maltose(in) + ADP + phosphate + H(+). Part of the ABC transporter complex MalEFGK involved in maltose/maltodextrin import. Responsible for energy coupling to the transport system. This is Maltose/maltodextrin import ATP-binding protein MalK from Escherichia coli O6:H1 (strain CFT073 / ATCC 700928 / UPEC).